We begin with the raw amino-acid sequence, 342 residues long: Sideroflexin-5 (342 aa).

A compositionally biased stretch (low complexity) spans 1–24 (MADTATTASAASAAASASNASSDA). A disordered region spans residues 1–29 (MADTATTASAASAAASASNASSDAPPFQL). The next 4 helical transmembrane spans lie at 105–125 (IFMPFRMSGYIPFGTPIVVGL), 165–185 (FIQGYLGAVISAVSIAVGLNV), 256–276 (LTRVVLPMPILVLPPIVMSML), and 289–309 (LLPVHSLVCLAAFGLALPLAI).

It belongs to the sideroflexin family. As to expression, specifically expressed in the brain.

The protein resides in the mitochondrion inner membrane. It catalyses the reaction citrate(in) = citrate(out). Functionally, mitochondrial amino-acid transporter. Transports citrate. Does not act as a serine transporter: not able to mediate transport of serine into mitochondria. In brown adipose tissue, plays a role in the regulation of UCP1-dependent thermogenesis probably by supporting mitochondrial glycerol-3-phosphate utilization. The protein is Sideroflexin-5 of Rattus norvegicus (Rat).